The sequence spans 259 residues: tRNA (guanine-N(7)-)-methyltransferase (259 aa).

A compositionally biased stretch (basic and acidic residues) spans 1–11; it reads MSNTDNSDKNT. Positions 1–29 are disordered; it reads MSNTDNSDKNTKPTGYRPPQTDFNTEFGN. S-adenosyl-L-methionine contacts are provided by Glu89, Glu114, Asp141, and Asp164. The active site involves Asp164. Substrate is bound by residues Lys168, Asp200, and 238 to 241; that span reads TKFE.

It belongs to the class I-like SAM-binding methyltransferase superfamily. TrmB family.

It catalyses the reaction guanosine(46) in tRNA + S-adenosyl-L-methionine = N(7)-methylguanosine(46) in tRNA + S-adenosyl-L-homocysteine. It functions in the pathway tRNA modification; N(7)-methylguanine-tRNA biosynthesis. In terms of biological role, catalyzes the formation of N(7)-methylguanine at position 46 (m7G46) in tRNA. In Corynebacterium diphtheriae (strain ATCC 700971 / NCTC 13129 / Biotype gravis), this protein is tRNA (guanine-N(7)-)-methyltransferase.